Consider the following 633-residue polypeptide: Polypeptide N-acetylgalactosaminyltransferase 3 (633 aa).

The Cytoplasmic portion of the chain corresponds to Met-1 to Lys-19. Residues Phe-20–Met-37 traverse the membrane as a helical; Signal-anchor for type II membrane protein segment. Residues Gln-38–Asp-633 are Lumenal-facing. Residues Asp-112–Glu-145 form a disordered region. Residues Ser-134–Glu-145 show a composition bias toward basic and acidic residues. The catalytic subdomain A stretch occupies residues Leu-184–Arg-293. The Mn(2+) site is built by Asp-277 and His-279. A glycan (N-linked (GlcNAc...) asparagine) is linked at Asn-297. Positions Pro-356–Arg-418 are catalytic subdomain B. His-415 lines the Mn(2+) pocket. A glycan (N-linked (GlcNAc...) asparagine) is linked at Asn-484. The 127-residue stretch at Val-504–Ser-630 folds into the Ricin B-type lectin domain. Cys-517 and Cys-535 are disulfide-bonded. UDP-N-acetyl-alpha-D-galactosamine-binding residues include Asp-519, Glu-522, His-536, and Asn-541. 2 cysteine pairs are disulfide-bonded: Cys-561–Cys-574 and Cys-605–Cys-618.

It belongs to the glycosyltransferase 2 family. GalNAc-T subfamily. Mn(2+) is required as a cofactor. Highly expressed in the reproductive tract, principally in the testis and uterus, and to a lesser degree in the cervix with only trace levels in the ovary. Also expressed at high level in sublingual gland, stomach and colon, with more moderate amounts present in the submandibular and parotid gland as well as the kidney.

Its subcellular location is the golgi apparatus. The protein resides in the golgi stack membrane. It carries out the reaction L-seryl-[protein] + UDP-N-acetyl-alpha-D-galactosamine = a 3-O-[N-acetyl-alpha-D-galactosaminyl]-L-seryl-[protein] + UDP + H(+). The catalysed reaction is L-threonyl-[protein] + UDP-N-acetyl-alpha-D-galactosamine = a 3-O-[N-acetyl-alpha-D-galactosaminyl]-L-threonyl-[protein] + UDP + H(+). It functions in the pathway protein modification; protein glycosylation. Catalyzes the initial reaction in O-linked oligosaccharide biosynthesis, the transfer of an N-acetyl-D-galactosamine residue to a serine or threonine residue on the protein receptor. Has activity toward HIV envelope glycoprotein gp120. Has activity towards EA2, MUC2 and MUC5. Probably glycosylates fibronectin in vivo. Glycosylates FGF23. The sequence is that of Polypeptide N-acetylgalactosaminyltransferase 3 (Galnt3) from Mus musculus (Mouse).